The sequence spans 251 residues: tRNA (guanine-N(1)-)-methyltransferase (251 aa).

Residues G113 and 133-138 (IGDYVL) each bind S-adenosyl-L-methionine.

The protein belongs to the RNA methyltransferase TrmD family. Homodimer.

It is found in the cytoplasm. The enzyme catalyses guanosine(37) in tRNA + S-adenosyl-L-methionine = N(1)-methylguanosine(37) in tRNA + S-adenosyl-L-homocysteine + H(+). Specifically methylates guanosine-37 in various tRNAs. This is tRNA (guanine-N(1)-)-methyltransferase from Methylococcus capsulatus (strain ATCC 33009 / NCIMB 11132 / Bath).